We begin with the raw amino-acid sequence, 766 residues long: 5-methyltetrahydropteroyltriglutamate--homocysteine methyltransferase (766 aa).

Residues Arg16–Lys19 and Lys124 each bind 5-methyltetrahydropteroyltri-L-glutamate. Residues Ile445–Ser447 and Glu498 contribute to the L-homocysteine site. L-methionine is bound by residues Ile445–Ser447 and Glu498. 5-methyltetrahydropteroyltri-L-glutamate is bound by residues Arg529–Cys530 and Trp575. Asp613 is an L-homocysteine binding site. Asp613 contacts L-methionine. Glu619 provides a ligand contact to 5-methyltetrahydropteroyltri-L-glutamate. The Zn(2+) site is built by His655, Cys657, and Glu679. The Proton donor role is filled by His708. Position 740 (Cys740) interacts with Zn(2+).

This sequence belongs to the vitamin-B12 independent methionine synthase family. Zn(2+) is required as a cofactor.

It carries out the reaction 5-methyltetrahydropteroyltri-L-glutamate + L-homocysteine = tetrahydropteroyltri-L-glutamate + L-methionine. It functions in the pathway amino-acid biosynthesis; L-methionine biosynthesis via de novo pathway; L-methionine from L-homocysteine (MetE route): step 1/1. Functionally, catalyzes the transfer of a methyl group from 5-methyltetrahydrofolate to homocysteine resulting in methionine formation. The sequence is that of 5-methyltetrahydropteroyltriglutamate--homocysteine methyltransferase from Pseudomonas syringae pv. tomato (strain ATCC BAA-871 / DC3000).